The chain runs to 756 residues: MTEQLRQAALDFHEFPIPGKIEVTPTKSLATQRDLALAYSPGVAEPCLEIEKDPAASYKYTARGNLVAVISNGTAVLGLGNIGALAGKPVMEGKGVLFKKFAGINVFDIEVNEHDPDKLVDIIASLEPTFGGVNLEDIKAPECFYIEQKLRERMNIPVFHDDQHGTAIISAAAIINSLRIVGKKIEDVRLVASGAGAASIACLNLLLSLGMKRENITVCDSKGVVYKGRDDKMDQTKKEYAIEDNGWRKLADAIPNADIFLGCSAAGALTQDMVKSMAAHPIILALANPNPEITPPEAKAVRPDAIVCTGRSDYPNQVNNVLCFPFIFRGALDVGATTINEEMKRAAVYAIADLALEEQNEVVTSAYGGEGATFGADYVIPRPFDPRLIVRIAPAVAKAAMESGVATRPIQNWDAYVEKLTQFVYKTSLFMRPIFSQAKSAKQRIILAEGEENKALHATQEVISMGLANPILIGRRSVIEEKIKKLGLRLTAGVDFEIVDNEDNPRYEECWKHYYELTKRKGITPAIAKRVVRSNTTVLASTLLSLGYADALVCGLFGSYGKHLASIRDIIGLKDGVKTAAALNSLVLPTGNVFLTDTHVNSNPTAEELAEITLMAAEEIHRFGIEPAVALLSHSNFGSSDSLGAPKMREVLQIVKERNPHLMIDGEMRGDLAMNEAHRKELMPDSPLKGSANLLVFPDLSASRISYSLLRGTTTAITVGPILMGMNKSAHILNPGASVRRIINMIAYAAVKAQQE.

The interval 1-428 (MTEQLRQAAL…KLTQFVYKTS (428 aa)) is malic enzyme. The Proton donor role is filled by Y39. The Proton acceptor role is filled by K94. Residues E136, D137, and D162 each contribute to the a divalent metal cation site. Residues 195-198 (AGAA), N288, and N320 each bind NADP(+). The phosphate acetyltransferase stretch occupies residues 429–756 (LFMRPIFSQA…AYAAVKAQQE (328 aa)).

This sequence in the N-terminal section; belongs to the malic enzymes family. It in the C-terminal section; belongs to the phosphate acetyltransferase and butyryltransferase family. Mg(2+) serves as cofactor. Requires Mn(2+) as cofactor.

The catalysed reaction is (S)-malate + NADP(+) = pyruvate + CO2 + NADPH. It catalyses the reaction oxaloacetate + H(+) = pyruvate + CO2. This Haemophilus influenzae (strain ATCC 51907 / DSM 11121 / KW20 / Rd) protein is NADP-dependent malic enzyme (maeB).